The primary structure comprises 473 residues: H(+)/Cl(-) exchange transporter ClcA (473 aa).

The Cytoplasmic segment spans residues 1–32 (MKTDTSTFLAQQIVRLRRRDQIRRLMQRDKTP). A helical membrane pass occupies residues 33 to 69 (LAILFMAAVVGTLTGLVGVAFEKAVSWVQNMRIGALV). The Periplasmic portion of the chain corresponds to 70 to 76 (QVADHAF). A helical membrane pass occupies residues 77–100 (LLWPLAFILSALLAMVGYFLVRKF). Residues 106–110 (GSGIP) carry the Selectivity filter part_1 motif. Serine 107 contacts chloride. The helical intramembrane region spans 109 to 116 (IPEIEGAL). At 117 to 123 (EELRPVR) the chain is on the cytoplasmic side. The next 2 membrane-spanning stretches (helical) occupy residues 124–141 (WWRV…TLGA) and 148–166 (EGPT…LDVF). A Selectivity filter part_2 motif is present at residues 146–150 (GREGP). Topologically, residues 167–176 (RMRSAEARHT) are cytoplasmic. 2 consecutive intramembrane regions (helical) follow at residues 177 to 189 (LLAT…LSAA) and 193 to 201 (PLAGILFII). At 202-214 (EEMRPQFRYNLIS) the chain is on the cytoplasmic side. A helical membrane pass occupies residues 215-232 (IKAVFTGVIMSSIVFRIF). Over 233 to 252 (NGEAPIIEVGKLSDAPVNTL) the chain is Periplasmic. Residues 253-281 (WLYLILGIIFGCVGPVFNSLVLRTQDMFQ) form a helical membrane-spanning segment. Residues 282-287 (RFHGGE) lie on the Cytoplasmic side of the membrane. Residues 288–309 (IKKWVLMGGAIGGLCGILGLIE) form a helical membrane-spanning segment. The Periplasmic portion of the chain corresponds to 310–329 (PEAAGGGFNLIPIAAAGNFS). Helical transmembrane passes span 330–349 (VGLL…LCFS) and 355–376 (GIFA…MAAA). Residues 355–359 (GIFAP) carry the Selectivity filter part_3 motif. Chloride-binding residues include isoleucine 356 and phenylalanine 357. Topologically, residues 377-386 (VLFPQYHLEA) are periplasmic. Positions 387–401 (GTFAIAGMGALMAAS) form an intramembrane region, helical. The segment at residues 402–404 (VRA) is an intramembrane region (note=Loop between two helices). Residues 405-416 (PLTGIVLVLEMT) constitute an intramembrane region (helical). An intramembrane region (note=Loop between two helices) is located at residues 417 to 421 (DNYQL). A helical transmembrane segment spans residues 422 to 438 (ILPMIITCLGATLLAQF). Residues 439–473 (LGGKPLYSTILARTLAKQDAEQAAKSQNAPAGENT) lie on the Cytoplasmic side of the membrane. Residue tyrosine 445 coordinates chloride.

It belongs to the chloride channel (TC 2.A.49) family. ClcA subfamily. In terms of assembly, homodimer.

The protein resides in the cell inner membrane. It carries out the reaction 2 chloride(in) + H(+)(out) = 2 chloride(out) + H(+)(in). Its function is as follows. Proton-coupled chloride transporter. Functions as antiport system and exchanges two chloride ions for 1 proton. Probably acts as an electrical shunt for an outwardly-directed proton pump that is linked to amino acid decarboxylation, as part of the extreme acid resistance (XAR) response. In Salmonella gallinarum (strain 287/91 / NCTC 13346), this protein is H(+)/Cl(-) exchange transporter ClcA.